A 201-amino-acid chain; its full sequence is Small ribosomal subunit protein uS4c (201 aa).

The disordered stretch occupies residues 15–44 (LGALPGLTNKRPRAGSDLRNQSRSGKKSQY). In terms of domain architecture, S4 RNA-binding spans 89-149 (MRLDNILFRL…DEQKSRALIQ (61 aa)).

The protein belongs to the universal ribosomal protein uS4 family. As to quaternary structure, part of the 30S ribosomal subunit. Contacts protein S5. The interaction surface between S4 and S5 is involved in control of translational fidelity.

Its subcellular location is the plastid. The protein resides in the chloroplast. One of the primary rRNA binding proteins, it binds directly to 16S rRNA where it nucleates assembly of the body of the 30S subunit. In terms of biological role, with S5 and S12 plays an important role in translational accuracy. This Helianthus annuus (Common sunflower) protein is Small ribosomal subunit protein uS4c (rps4).